The following is a 796-amino-acid chain: Volume-regulated anion channel subunit LRRC8E (796 aa).

Over M1–P22 the chain is Cytoplasmic. The helical transmembrane segment at W23 to C43 threads the bilayer. Residues T44–K116 are Extracellular-facing. An intrachain disulfide couples C54 to C301. N-linked (GlcNAc...) asparagine glycosylation occurs at N63. A helical membrane pass occupies residues Y117–F137. At K138–K265 the chain is on the cytoplasmic side. A helical membrane pass occupies residues F266 to C286. The Extracellular segment spans residues R287–A313. N302 carries N-linked (GlcNAc...) asparagine glycosylation. The chain crosses the membrane as a helical span at residues F314–L334. Residues F335 to E796 are Cytoplasmic-facing. 11 LRR repeats span residues G508–E529, Q536–A557, H559–K579, A583–L604, A606–Q627, K631–L652, S654–C675, G677–L698, N700–C721, K723–L744, and A746–C767.

Belongs to the LRRC8 family. As to quaternary structure, heterohexamer; oligomerizes with other LRRC8 proteins (LRRC8A, LRRC8C, LRRC8D and/or LRRC8B) to form a heterohexamer. In vivo, the subunit composition may depend primarily on expression levels, and heterooligomeric channels containing various proportions of the different LRRC8 proteins may coexist.

It is found in the cell membrane. The protein resides in the endoplasmic reticulum membrane. Its subcellular location is the lysosome membrane. It carries out the reaction chloride(in) = chloride(out). The enzyme catalyses iodide(out) = iodide(in). The catalysed reaction is taurine(out) = taurine(in). It catalyses the reaction 2',3'-cGAMP(out) = 2',3'-cGAMP(in). In terms of biological role, non-essential component of the volume-regulated anion channel (VRAC, also named VSOAC channel), an anion channel required to maintain a constant cell volume in response to extracellular or intracellular osmotic changes. The VRAC channel conducts iodide better than chloride and can also conduct organic osmolytes like taurine. Mediates efflux of amino acids, such as aspartate, in response to osmotic stress. The VRAC channel also mediates transport of immunoreactive cyclic dinucleotide GMP-AMP (2'-3'-cGAMP), an immune messenger produced in response to DNA virus in the cytosol. Channel activity requires LRRC8A plus at least one other family member (LRRC8B, LRRC8C, LRRC8D or LRRC8E); channel characteristics depend on the precise subunit composition. Also plays a role in lysosome homeostasis by forming functional lysosomal VRAC channels in response to low cytoplasmic ionic strength condition: lysosomal VRAC channels are necessary for the formation of large lysosome-derived vacuoles, which store and then expel excess water to maintain cytosolic water homeostasis. The polypeptide is Volume-regulated anion channel subunit LRRC8E (Homo sapiens (Human)).